Consider the following 424-residue polypeptide: GTPase HflX (424 aa).

Residues 194 to 364 (YTVALTGYTG…AVVEMLPEKV (171 aa)) enclose the Hflx-type G domain. GTP is bound by residues 200–207 (GYTGAGKT), 225–229 (FATLS), 246–249 (DTIG), 314–317 (NKID), and 342–344 (SAA). Mg(2+)-binding residues include threonine 207 and threonine 227.

It belongs to the TRAFAC class OBG-HflX-like GTPase superfamily. HflX GTPase family. As to quaternary structure, monomer. Associates with the 50S ribosomal subunit. Mg(2+) serves as cofactor.

The protein localises to the cytoplasm. GTPase that associates with the 50S ribosomal subunit and may have a role during protein synthesis or ribosome biogenesis. The chain is GTPase HflX from Thermofilum pendens (strain DSM 2475 / Hrk 5).